The chain runs to 444 residues: Trigger factor (444 aa).

The PPIase FKBP-type domain occupies 160 to 245 (DMQVTFDFEG…VKQVEKPKLP (86 aa)).

Belongs to the FKBP-type PPIase family. Tig subfamily.

The protein localises to the cytoplasm. It carries out the reaction [protein]-peptidylproline (omega=180) = [protein]-peptidylproline (omega=0). Its function is as follows. Involved in protein export. Acts as a chaperone by maintaining the newly synthesized protein in an open conformation. Functions as a peptidyl-prolyl cis-trans isomerase. The protein is Trigger factor of Acinetobacter baumannii (strain SDF).